We begin with the raw amino-acid sequence, 253 residues long: MAPVTATHQEAQESVKNVIQDLLNLMVQVSQYDTNPSSSNNNTPTSSRASGGGGGGGGGHASSRDIIAQSLQTLDASLLSVYRTANLLPSSPSSGPSNNQPQQGTTELERAEAAQFASTFNNTHNPYAPHVHQPGPQNPGIPIPLITYVENGRNPDVYTREFIELVRRSNQLMRGKMHAFRDFRDVLAGEMEAALPELREDIKRVVEATGGPGPAEGSEERAREGVVGSLSAGGEGQQGQGQGQQGQGQQSGQ.

Disordered regions lie at residues 32 to 63, 88 to 109, and 206 to 253; these read YDTN…HASS, LPSS…TELE, and VEAT…QSGQ. Over residues 34-47 the composition is skewed to low complexity; that stretch reads TNPSSSNNNTPTSS. The segment covering 50–60 has biased composition (gly residues); sequence SGGGGGGGGGH. Residues 88–104 are compositionally biased toward low complexity; the sequence is LPSSPSSGPSNNQPQQG. The span at 231–253 shows a compositional bias: gly residues; it reads SAGGEGQQGQGQGQQGQGQQSGQ.

This sequence belongs to the Mediator complex subunit 10 family. Component of the Mediator complex.

The protein localises to the nucleus. Component of the Mediator complex, a coactivator involved in the regulated transcription of nearly all RNA polymerase II-dependent genes. Mediator functions as a bridge to convey information from gene-specific regulatory proteins to the basal RNA polymerase II transcription machinery. Mediator is recruited to promoters by direct interactions with regulatory proteins and serves as a scaffold for the assembly of a functional preinitiation complex with RNA polymerase II and the general transcription factors. The sequence is that of Mediator of RNA polymerase II transcription subunit 10 (nut2) from Neurospora crassa (strain ATCC 24698 / 74-OR23-1A / CBS 708.71 / DSM 1257 / FGSC 987).